The following is a 192-amino-acid chain: UPF0149 protein YPO0911/y3298/YP_3608 (192 aa).

Belongs to the UPF0149 family.

This chain is UPF0149 protein YPO0911/y3298/YP_3608, found in Yersinia pestis.